The following is a 229-amino-acid chain: uncharacterized protein (229 aa).

The tract at residues 61–229 (MQAEDKVSKP…TESEDKPKRG (169 aa)) is disordered. A compositionally biased stretch (basic and acidic residues) spans 109–128 (QQEKQQPEKAVVEQQEKQQP). The span at 166–194 (QPEQPERQQQAQPERQQQAQPERQQQAQP) shows a compositional bias: low complexity. The segment covering 195–204 (EEAEDAEQEP) has biased composition (acidic residues). The segment covering 218–229 (TQTESEDKPKRG) has biased composition (basic and acidic residues).

This is an uncharacterized protein from Frog virus 3 (isolate Goorha) (FV-3).